We begin with the raw amino-acid sequence, 471 residues long: Cytolysin (471 aa).

The signal sequence occupies residues 1–20; that stretch reads MKKMTLFTLSLLATAVQVGA. One can recognise a Ricin B-type lectin domain in the interval 338–465; the sequence is AHVTLQSLSN…EANQARWKPT (128 aa).

Belongs to the HlyA hemolysin family.

Bacterial hemolysins are exotoxins that attack blood cell membranes and cause cell rupture by mechanisms not clearly defined. This is Cytolysin (vvhA) from Vibrio vulnificus (strain CMCP6).